We begin with the raw amino-acid sequence, 349 residues long: Mannonate dehydratase (349 aa).

This sequence belongs to the mannonate dehydratase family. Fe(2+) is required as a cofactor. It depends on Mn(2+) as a cofactor.

The catalysed reaction is D-mannonate = 2-dehydro-3-deoxy-D-gluconate + H2O. Its pathway is carbohydrate metabolism; pentose and glucuronate interconversion. Functionally, catalyzes the dehydration of D-mannonate. The sequence is that of Mannonate dehydratase from Oceanobacillus iheyensis (strain DSM 14371 / CIP 107618 / JCM 11309 / KCTC 3954 / HTE831).